Consider the following 181-residue polypeptide: Salmonella anti-inflammatory response activator (181 aa).

A helical membrane pass occupies residues 4–24; sequence FVYIYILVIYGSYLWFSLGGN.

In terms of assembly, interacts with host (human) STAT3.

It localises to the membrane. It is found in the host cytoplasm. Its function is as follows. A Salmonella strain-specific effector that induces a host STAT3-dependent anti-inflammatory pathway. In bacteria-infected host cells (human) leads to phosphorylation of host STAT3, at least on 'Tyr-705' and interleukin-10 (IL-10, IL10) production; expressing the gene alone in host cells induces STAT3 phosphorylation and IL-10 production. IL-10 production requires STAT3 in infected cells. Contributes to virulence in mouse infection models. Encoded in only a few S.typhimurium serovars, it may be a specific effector for adaptation to bovine hosts. The sequence is that of Salmonella anti-inflammatory response activator from Salmonella typhimurium (strain 14028s / SGSC 2262).